The chain runs to 178 residues: N-alpha-acetyltransferase 20 (178 aa).

Residues 2-157 form the N-acetyltransferase domain; that stretch reads TTLRAFTCDD…DAYDMRKALS (156 aa).

This sequence belongs to the acetyltransferase family. ARD1 subfamily. As to quaternary structure, component of the N-terminal acetyltransferase B (NatB) complex which is composed of naa20 and naa25.

The protein resides in the cytoplasm. It localises to the nucleus. The catalysed reaction is N-terminal L-methionyl-L-asparaginyl-[protein] + acetyl-CoA = N-terminal N(alpha)-acetyl-L-methionyl-L-asparaginyl-[protein] + CoA + H(+). The enzyme catalyses N-terminal L-methionyl-L-glutaminyl-[protein] + acetyl-CoA = N-terminal N(alpha)-acetyl-L-methionyl-L-glutaminyl-[protein] + CoA + H(+). It catalyses the reaction N-terminal L-methionyl-L-aspartyl-[protein] + acetyl-CoA = N-terminal N(alpha)-acetyl-L-methionyl-L-aspartyl-[protein] + CoA + H(+). It carries out the reaction N-terminal L-methionyl-L-glutamyl-[protein] + acetyl-CoA = N-terminal N(alpha)-acetyl-L-methionyl-L-glutamyl-[protein] + CoA + H(+). Its function is as follows. Catalytic subunit of the NatB complex which catalyzes acetylation of the N-terminal methionine residues of peptides beginning with Met-Asp, Met-Glu, Met-Asn and Met-Gln. Proteins with cell cycle functions are overrepresented in the pool of NatB substrates. Required for maintaining the structure and function of actomyosin fibers and for proper cellular migration. This chain is N-alpha-acetyltransferase 20 (naa20), found in Danio rerio (Zebrafish).